Here is a 514-residue protein sequence, read N- to C-terminus: Probable peptidoglycan glycosyltransferase FtsW (514 aa).

The next 9 membrane-spanning stretches (helical) occupy residues 45–65 (IGLI…VTSA), 86–106 (IYIV…MQFW), 108–128 (TANP…LLVG), 137–157 (WLAL…FFFT), 182–202 (VVFF…TVVV), 218–238 (LWQF…LIVF), 301–321 (ILAE…ILWM), 347–367 (VGIW…GILP), and 373–393 (LPLV…VALL). Disordered stretches follow at residues 411–437 (GDNK…RTKH) and 449–501 (DYNQ…AGIK).

It belongs to the SEDS family. FtsW subfamily.

It localises to the cell inner membrane. It catalyses the reaction [GlcNAc-(1-&gt;4)-Mur2Ac(oyl-L-Ala-gamma-D-Glu-L-Lys-D-Ala-D-Ala)](n)-di-trans,octa-cis-undecaprenyl diphosphate + beta-D-GlcNAc-(1-&gt;4)-Mur2Ac(oyl-L-Ala-gamma-D-Glu-L-Lys-D-Ala-D-Ala)-di-trans,octa-cis-undecaprenyl diphosphate = [GlcNAc-(1-&gt;4)-Mur2Ac(oyl-L-Ala-gamma-D-Glu-L-Lys-D-Ala-D-Ala)](n+1)-di-trans,octa-cis-undecaprenyl diphosphate + di-trans,octa-cis-undecaprenyl diphosphate + H(+). The protein operates within cell wall biogenesis; peptidoglycan biosynthesis. Its function is as follows. Peptidoglycan polymerase that is essential for cell division. The sequence is that of Probable peptidoglycan glycosyltransferase FtsW from Alteromonas naphthalenivorans.